Reading from the N-terminus, the 266-residue chain is Zinc transporter ZupT (266 aa).

8 helical membrane passes run 8-28 (LALT…ALMV), 35-55 (FLTF…FVEI), 70-90 (HAAG…IWLI), 123-143 (GIFT…AVFF), 152-172 (GVVI…AVAV), 185-205 (FSYS…GYAL), 209-229 (FLSP…MVYI), and 246-266 (IAIS…LMLA). Fe(2+) contacts are provided by Asn134 and Glu137. Glu137 and His162 together coordinate Zn(2+). Fe(2+)-binding residues include Asn163, Glu166, and Glu195. A Zn(2+)-binding site is contributed by Glu166.

Belongs to the ZIP transporter (TC 2.A.5) family. ZupT subfamily.

The protein localises to the cell inner membrane. It carries out the reaction Zn(2+)(in) = Zn(2+)(out). Its function is as follows. Mediates zinc uptake. May also transport other divalent cations. In Chlorobium limicola (strain DSM 245 / NBRC 103803 / 6330), this protein is Zinc transporter ZupT.